We begin with the raw amino-acid sequence, 323 residues long: Lipid A biosynthesis acyltransferase 1 (323 aa).

The helical transmembrane segment at 23-43 threads the bilayer; sequence YWGAWLGVAAMAGIALTPPKF. Residues 139–144 carry the HXXXXD motif motif; the sequence is HGWAVD.

Belongs to the LpxL/LpxM/LpxP family. LpxM subfamily.

It is found in the cell inner membrane. The catalysed reaction is an alpha-Kdo-(2-&gt;4)-alpha-Kdo-(2-&gt;6)-(acyl)-lipid IVA + a fatty acyl-[ACP] = an alpha-Kdo-(2-&gt;4)-alpha-Kdo-(2-&gt;6)-lipid A + holo-[ACP]. Its pathway is glycolipid biosynthesis; KDO(2)-lipid A biosynthesis; KDO(2)-lipid A from CMP-3-deoxy-D-manno-octulosonate and lipid IV(A): step 4/4. It participates in bacterial outer membrane biogenesis; lipopolysaccharide biosynthesis. In terms of biological role, catalyzes the transfer of an acyl chain from an acyl-[acyl-carrier-protein] (ACP) to a Kdo(2)-(acyl)-lipid IV(A) to form a Kdo(2)-lipid A. The protein is Lipid A biosynthesis acyltransferase 1 of Shigella flexneri.